A 349-amino-acid chain; its full sequence is GMP reductase (349 aa).

Residue 108-131 participates in NADP(+) binding; that stretch reads IDFLKIKKIFLLSSELKYICIDVA. 2 residues coordinate K(+): G181 and G183. C186 (thioimidate intermediate) is an active-site residue. Residue 216–239 participates in NADP(+) binding; sequence IISDGGCTVSGDIAKAFGGGADFV.

Belongs to the IMPDH/GMPR family. GuaC type 1 subfamily. In terms of assembly, homotetramer.

It carries out the reaction IMP + NH4(+) + NADP(+) = GMP + NADPH + 2 H(+). Catalyzes the irreversible NADPH-dependent deamination of GMP to IMP. It functions in the conversion of nucleobase, nucleoside and nucleotide derivatives of G to A nucleotides, and in maintaining the intracellular balance of A and G nucleotides. In Buchnera aphidicola subsp. Acyrthosiphon pisum (strain 5A), this protein is GMP reductase.